A 118-amino-acid chain; its full sequence is Ribosome-binding factor A (118 aa).

Belongs to the RbfA family. Monomer. Binds 30S ribosomal subunits, but not 50S ribosomal subunits or 70S ribosomes.

It is found in the cytoplasm. Functionally, one of several proteins that assist in the late maturation steps of the functional core of the 30S ribosomal subunit. Associates with free 30S ribosomal subunits (but not with 30S subunits that are part of 70S ribosomes or polysomes). Required for efficient processing of 16S rRNA. May interact with the 5'-terminal helix region of 16S rRNA. This is Ribosome-binding factor A from Bacillus cereus (strain ATCC 10987 / NRS 248).